We begin with the raw amino-acid sequence, 335 residues long: Ferrochelatase (335 aa).

His-194 and Glu-275 together coordinate Fe cation.

The protein belongs to the ferrochelatase family.

The protein resides in the cytoplasm. The enzyme catalyses heme b + 2 H(+) = protoporphyrin IX + Fe(2+). Its pathway is porphyrin-containing compound metabolism; protoheme biosynthesis; protoheme from protoporphyrin-IX: step 1/1. In terms of biological role, catalyzes the ferrous insertion into protoporphyrin IX. This is Ferrochelatase from Sodalis glossinidius (strain morsitans).